Consider the following 353-residue polypeptide: MTAILERRESESLWGRFCNWITSTENRLYIGWFGVLMIPTLLTATSVFIIAFIAAPPVDIDGIREPVSGSLLYGNNIISGAIIPTSAAIGLHFYPIWEAASVDEWLYNGGPYELIVLHFLLGVACYMGREWELSFRLGMRPWIAVAYSAPVAAATAVFLIYPIGQGSFSDGMPLGISGTFNFMIVFQAEHNILMHPFHMLGVAGVFGGSLFSAMHGSLVTSSLIRETTENESANEGYRFGQEEETYNIVAAHGYFGRLIFQYASFNNSRSLHFFLTAWPVVGIWFTALGISTMAFNLNGFNFNQSVVDSQGRVINTWADIINRANLGMEVMHERNAHNFPLDLAAVEAPSTNG.

Thr2 carries the N-acetylthreonine modification. Thr2 carries the phosphothreonine modification. 3 helical membrane passes run 29-46 (YIGW…TATS), 118-133 (HFLL…EWEL), and 142-156 (WIAV…AATA). Position 118 (His118) interacts with chlorophyll a. Tyr126 contacts pheophytin a. Asp170 and Glu189 together coordinate [CaMn4O5] cluster. The helical transmembrane segment at 197–218 (FHMLGVAGVFGGSLFSAMHGSL) threads the bilayer. His198 lines the chlorophyll a pocket. A quinone contacts are provided by residues His215 and 264 to 265 (SF). His215 is a Fe cation binding site. His272 serves as a coordination point for Fe cation. The chain crosses the membrane as a helical span at residues 274–288 (FLTAWPVVGIWFTAL). [CaMn4O5] cluster is bound by residues His332, Glu333, Asp342, and Ala344. Positions 345 to 353 (AVEAPSTNG) are excised as a propeptide.

It belongs to the reaction center PufL/M/PsbA/D family. PSII is composed of 1 copy each of membrane proteins PsbA, PsbB, PsbC, PsbD, PsbE, PsbF, PsbH, PsbI, PsbJ, PsbK, PsbL, PsbM, PsbT, PsbX, PsbY, PsbZ, Psb30/Ycf12, at least 3 peripheral proteins of the oxygen-evolving complex and a large number of cofactors. It forms dimeric complexes. The cofactor is The D1/D2 heterodimer binds P680, chlorophylls that are the primary electron donor of PSII, and subsequent electron acceptors. It shares a non-heme iron and each subunit binds pheophytin, quinone, additional chlorophylls, carotenoids and lipids. D1 provides most of the ligands for the Mn4-Ca-O5 cluster of the oxygen-evolving complex (OEC). There is also a Cl(-1) ion associated with D1 and D2, which is required for oxygen evolution. The PSII complex binds additional chlorophylls, carotenoids and specific lipids.. In terms of processing, tyr-161 forms a radical intermediate that is referred to as redox-active TyrZ, YZ or Y-Z. Post-translationally, C-terminally processed by CTPA; processing is essential to allow assembly of the oxygen-evolving complex and thus photosynthetic growth.

Its subcellular location is the plastid. The protein localises to the chloroplast thylakoid membrane. The catalysed reaction is 2 a plastoquinone + 4 hnu + 2 H2O = 2 a plastoquinol + O2. Photosystem II (PSII) is a light-driven water:plastoquinone oxidoreductase that uses light energy to abstract electrons from H(2)O, generating O(2) and a proton gradient subsequently used for ATP formation. It consists of a core antenna complex that captures photons, and an electron transfer chain that converts photonic excitation into a charge separation. The D1/D2 (PsbA/PsbD) reaction center heterodimer binds P680, the primary electron donor of PSII as well as several subsequent electron acceptors. The sequence is that of Photosystem II protein D1 from Barbarea verna (Land cress).